Reading from the N-terminus, the 442-residue chain is L-seryl-tRNA(Sec) selenium transferase (442 aa).

Residue lysine 284 is modified to N6-(pyridoxal phosphate)lysine.

This sequence belongs to the SelA family. Pyridoxal 5'-phosphate is required as a cofactor.

The protein localises to the cytoplasm. The catalysed reaction is L-seryl-tRNA(Sec) + selenophosphate + H(+) = L-selenocysteinyl-tRNA(Sec) + phosphate. Its pathway is aminoacyl-tRNA biosynthesis; selenocysteinyl-tRNA(Sec) biosynthesis; selenocysteinyl-tRNA(Sec) from L-seryl-tRNA(Sec) (bacterial route): step 1/1. In terms of biological role, converts seryl-tRNA(Sec) to selenocysteinyl-tRNA(Sec) required for selenoprotein biosynthesis. This Campylobacter fetus subsp. fetus (strain 82-40) protein is L-seryl-tRNA(Sec) selenium transferase.